Consider the following 98-residue polypeptide: NADH-ubiquinone oxidoreductase chain 4L (98 aa).

The next 3 membrane-spanning stretches (helical) occupy residues 1–21 (MPVV…GLLI), 29–49 (SLLC…VTVL), and 61–81 (IILL…LVMV).

The protein belongs to the complex I subunit 4L family. Core subunit of respiratory chain NADH dehydrogenase (Complex I) which is composed of 45 different subunits.

Its subcellular location is the mitochondrion inner membrane. It catalyses the reaction a ubiquinone + NADH + 5 H(+)(in) = a ubiquinol + NAD(+) + 4 H(+)(out). Core subunit of the mitochondrial membrane respiratory chain NADH dehydrogenase (Complex I) which catalyzes electron transfer from NADH through the respiratory chain, using ubiquinone as an electron acceptor. Part of the enzyme membrane arm which is embedded in the lipid bilayer and involved in proton translocation. The chain is NADH-ubiquinone oxidoreductase chain 4L (MT-ND4L) from Helarctos malayanus (Malayan sun bear).